Reading from the N-terminus, the 316-residue chain is Acetyl-coenzyme A carboxylase carboxyl transferase subunit alpha (316 aa).

In terms of domain architecture, CoA carboxyltransferase C-terminal spans Asn-24–Glu-291.

The protein belongs to the AccA family. In terms of assembly, acetyl-CoA carboxylase is a heterohexamer composed of biotin carboxyl carrier protein (AccB), biotin carboxylase (AccC) and two subunits each of ACCase subunit alpha (AccA) and ACCase subunit beta (AccD).

The protein resides in the cytoplasm. The enzyme catalyses N(6)-carboxybiotinyl-L-lysyl-[protein] + acetyl-CoA = N(6)-biotinyl-L-lysyl-[protein] + malonyl-CoA. It functions in the pathway lipid metabolism; malonyl-CoA biosynthesis; malonyl-CoA from acetyl-CoA: step 1/1. Functionally, component of the acetyl coenzyme A carboxylase (ACC) complex. First, biotin carboxylase catalyzes the carboxylation of biotin on its carrier protein (BCCP) and then the CO(2) group is transferred by the carboxyltransferase to acetyl-CoA to form malonyl-CoA. The chain is Acetyl-coenzyme A carboxylase carboxyl transferase subunit alpha from Ruthia magnifica subsp. Calyptogena magnifica.